The sequence spans 214 residues: Octanoyltransferase (214 aa).

The BPL/LPL catalytic domain maps to 35–211 (KSNIDFIWLG…IIQEEFYFNF (177 aa)). Substrate contacts are provided by residues 75–82 (RGGEVTCH), 142–144 (SIG), and 155–157 (GFS). Catalysis depends on C173, which acts as the Acyl-thioester intermediate.

It belongs to the LipB family.

Its subcellular location is the cytoplasm. It carries out the reaction octanoyl-[ACP] + L-lysyl-[protein] = N(6)-octanoyl-L-lysyl-[protein] + holo-[ACP] + H(+). The protein operates within protein modification; protein lipoylation via endogenous pathway; protein N(6)-(lipoyl)lysine from octanoyl-[acyl-carrier-protein]: step 1/2. Catalyzes the transfer of endogenously produced octanoic acid from octanoyl-acyl-carrier-protein onto the lipoyl domains of lipoate-dependent enzymes. Lipoyl-ACP can also act as a substrate although octanoyl-ACP is likely to be the physiological substrate. In Prochlorococcus marinus (strain MIT 9515), this protein is Octanoyltransferase.